Here is a 228-residue protein sequence, read N- to C-terminus: UPF0758 protein MW1604 (228 aa).

One can recognise an MPN domain in the interval Lys102 to Phe224. Zn(2+) is bound by residues His173, His175, and Asp186. Positions His173 to Asp186 match the JAMM motif motif.

This sequence belongs to the UPF0758 family.

This is UPF0758 protein MW1604 from Staphylococcus aureus (strain MW2).